The following is a 396-amino-acid chain: Flavohemoprotein (396 aa).

Residues 1 to 136 (MLDNHTIAIV…LANVFIQRED (136 aa)) enclose the Globin domain. His85 is a heme b binding site. Active-site charge relay system residues include Tyr95 and Glu135. Residues 147–396 (GGWSGVRPFR…YECFGPHKVV (250 aa)) are reductase. Positions 150-255 (SGVRPFRIVN…AAPHGDFFLD (106 aa)) constitute an FAD-binding FR-type domain. FAD is bound by residues Tyr188 and 204-207 (RQYS). 268 to 273 (GVGQTP) is an NADP(+) binding site. Residue 389–392 (CFGP) coordinates FAD.

Belongs to the globin family. Two-domain flavohemoproteins subfamily. It in the C-terminal section; belongs to the flavoprotein pyridine nucleotide cytochrome reductase family. Heme b serves as cofactor. Requires FAD as cofactor.

It carries out the reaction 2 nitric oxide + NADPH + 2 O2 = 2 nitrate + NADP(+) + H(+). The enzyme catalyses 2 nitric oxide + NADH + 2 O2 = 2 nitrate + NAD(+) + H(+). Its function is as follows. Is involved in NO detoxification in an aerobic process, termed nitric oxide dioxygenase (NOD) reaction that utilizes O(2) and NAD(P)H to convert NO to nitrate, which protects the bacterium from various noxious nitrogen compounds. Therefore, plays a central role in the inducible response to nitrosative stress. This chain is Flavohemoprotein, found in Pectobacterium atrosepticum (strain SCRI 1043 / ATCC BAA-672) (Erwinia carotovora subsp. atroseptica).